The chain runs to 238 residues: Endo-chitosanase (238 aa).

The signal sequence occupies residues 1–17 (MRLSEILTVALVTGATA). N-linked (GlcNAc...) asparagine glycosylation occurs at asparagine 83.

The protein belongs to the glycosyl hydrolase 75 family.

The protein resides in the secreted. It carries out the reaction Endohydrolysis of beta-(1-&gt;4)-linkages between D-glucosamine residues in a partly acetylated chitosan.. Chitosanase catalyzing the endo-type cleavage of chitosan, the deacylated form of chitin. Chitosanase may be crucial in the degradation of the deacetylated portion of chitin in the fungal cell wall. Chitoolisaccharides produced by the hydrolysis of partially N-acetylated chitosan are known to have many biological activities, including antibacterial activity, immune-enhancing effects, and elicitor activity. The chitosans with higher degrees of deacetylation were shown to be the better substrates. Chitodimer, chitotrimer, and chitotetramer are the major products but monoacetyl chitodimer, monoacetyl chitotrimer, and monoacetyl chitotetramer are also produced. The protein is Endo-chitosanase (csn) of Aspergillus fumigatus (Neosartorya fumigata).